Consider the following 253-residue polypeptide: Triosephosphate isomerase (253 aa).

Substrate is bound at residue 13–15; sequence NWK. The Electrophile role is filled by His100. Catalysis depends on Glu169, which acts as the Proton acceptor. Substrate contacts are provided by residues Gly175, Ser208, and 229-230; that span reads GG.

Belongs to the triosephosphate isomerase family. Homodimer.

The protein resides in the cytoplasm. The enzyme catalyses D-glyceraldehyde 3-phosphate = dihydroxyacetone phosphate. It functions in the pathway carbohydrate biosynthesis; gluconeogenesis. Its pathway is carbohydrate degradation; glycolysis; D-glyceraldehyde 3-phosphate from glycerone phosphate: step 1/1. Involved in the gluconeogenesis. Catalyzes stereospecifically the conversion of dihydroxyacetone phosphate (DHAP) to D-glyceraldehyde-3-phosphate (G3P). The chain is Triosephosphate isomerase from Synechococcus sp. (strain RCC307).